Here is a 234-residue protein sequence, read N- to C-terminus: Endonuclease V (234 aa).

Asp46 and Asp116 together coordinate Mg(2+).

This sequence belongs to the endonuclease V family. The cofactor is Mg(2+).

The protein resides in the cytoplasm. The catalysed reaction is Endonucleolytic cleavage at apurinic or apyrimidinic sites to products with a 5'-phosphate.. In terms of biological role, DNA repair enzyme involved in the repair of deaminated bases. Selectively cleaves double-stranded DNA at the second phosphodiester bond 3' to a deoxyinosine leaving behind the intact lesion on the nicked DNA. This Clostridium acetobutylicum (strain ATCC 824 / DSM 792 / JCM 1419 / IAM 19013 / LMG 5710 / NBRC 13948 / NRRL B-527 / VKM B-1787 / 2291 / W) protein is Endonuclease V.